We begin with the raw amino-acid sequence, 108 residues long: Cell division topological specificity factor (108 aa).

Belongs to the MinE family.

Functionally, prevents the cell division inhibition by proteins MinC and MinD at internal division sites while permitting inhibition at polar sites. This ensures cell division at the proper site by restricting the formation of a division septum at the midpoint of the long axis of the cell. This Prochlorococcus marinus (strain AS9601) protein is Cell division topological specificity factor.